Here is a 190-residue protein sequence, read N- to C-terminus: Ribose 1,5-bisphosphate phosphokinase PhnN (190 aa).

Residues 135–159 (RGREPEPGIGQRLARPDPAPGHQAD) are disordered.

It belongs to the ribose 1,5-bisphosphokinase family.

The catalysed reaction is alpha-D-ribose 1,5-bisphosphate + ATP = 5-phospho-alpha-D-ribose 1-diphosphate + ADP. Its pathway is metabolic intermediate biosynthesis; 5-phospho-alpha-D-ribose 1-diphosphate biosynthesis; 5-phospho-alpha-D-ribose 1-diphosphate from D-ribose 5-phosphate (route II): step 3/3. Functionally, catalyzes the phosphorylation of ribose 1,5-bisphosphate to 5-phospho-D-ribosyl alpha-1-diphosphate (PRPP). The polypeptide is Ribose 1,5-bisphosphate phosphokinase PhnN (Pseudofrankia inefficax (strain DSM 45817 / CECT 9037 / DDB 130130 / EuI1c) (Frankia inefficax)).